Here is a 199-residue protein sequence, read N- to C-terminus: Ribonuclease P protein subunit p25 (199 aa).

The segment covering 1–11 (MENFRKVRSEE) has biased composition (basic and acidic residues). Disordered stretches follow at residues 1 to 31 (MENF…FADL) and 146 to 199 (PRQL…DRTA). S172 carries the phosphoserine modification. Acidic residues predominate over residues 190-199 (PEAENEDRTA).

This sequence belongs to the histone-like Alba family. In terms of assembly, component of nuclear RNase P and RNase MRP ribonucleoproteins. RNase P consists of a catalytic RNA moiety and 10 different protein chains; POP1, POP4, POP5, POP7, RPP14, RPP21, RPP25, RPP30, RPP38 and RPP40. Within the RNase P complex, POP1, POP7 and RPP25 form the 'finger' subcomplex, POP5, RPP14, RPP40 and homodimeric RPP30 form the 'palm' subcomplex, and RPP21, POP4 and RPP38 form the 'wrist' subcomplex. All subunits of the RNase P complex interact with the catalytic RNA. Several subunits of RNase P are also part of the RNase MRP complex. RNase MRP consists of a catalytic RNA moiety and about 8 protein subunits; POP1, POP7, RPP25, RPP30, RPP38, RPP40 and possibly also POP4 and POP5. POP7 forms a heterodimer with RPP25 that binds to the P3 stem loop of the catalytic RNA.

The protein localises to the nucleus. It localises to the nucleolus. In terms of biological role, component of ribonuclease P, a ribonucleoprotein complex that generates mature tRNA molecules by cleaving their 5'-ends. Also a component of the MRP ribonuclease complex, which cleaves pre-rRNA sequences. This Mus musculus (Mouse) protein is Ribonuclease P protein subunit p25 (Rpp25).